A 378-amino-acid polypeptide reads, in one-letter code: tRNA-specific 2-thiouridylase MnmA (378 aa).

Residues glycine 9–serine 16 and methionine 35 each bind ATP. The segment at asparagine 94–aspartate 96 is interaction with target base in tRNA. The active-site Nucleophile is cysteine 99. A disulfide bridge connects residues cysteine 99 and cysteine 195. Glycine 123 is an ATP binding site. An interaction with tRNA region spans residues lysine 145 to glutamine 147. The Cysteine persulfide intermediate role is filled by cysteine 195. The interaction with tRNA stretch occupies residues arginine 307–tyrosine 308.

This sequence belongs to the MnmA/TRMU family.

The protein resides in the cytoplasm. The catalysed reaction is S-sulfanyl-L-cysteinyl-[protein] + uridine(34) in tRNA + AH2 + ATP = 2-thiouridine(34) in tRNA + L-cysteinyl-[protein] + A + AMP + diphosphate + H(+). Catalyzes the 2-thiolation of uridine at the wobble position (U34) of tRNA, leading to the formation of s(2)U34. This chain is tRNA-specific 2-thiouridylase MnmA, found in Xanthomonas euvesicatoria pv. vesicatoria (strain 85-10) (Xanthomonas campestris pv. vesicatoria).